The sequence spans 687 residues: uncharacterized protein (687 aa).

A compositionally biased stretch (low complexity) spans 277–295; sequence SVCSSQSFSSGQSDISMSS. Disordered regions lie at residues 277–337, 342–361, and 531–564; these read SVCS…QDCD, DTESVANEPEPYSSTMSEMP, and HVEQAGGDYSSSGQKDQKKKRGKRPVSNPPPSLI. The span at 300 to 313 shows a compositional bias: polar residues; sequence NGSSVGNGSLSPMT.

This is an uncharacterized protein from Caenorhabditis elegans.